Reading from the N-terminus, the 225-residue chain is 7-cyano-7-deazaguanine synthase (225 aa).

Residue 10 to 20 (VSGGLDSTTVI) coordinates ATP. Positions 189, 199, 202, and 205 each coordinate Zn(2+).

The protein belongs to the QueC family. The cofactor is Zn(2+).

The catalysed reaction is 7-carboxy-7-deazaguanine + NH4(+) + ATP = 7-cyano-7-deazaguanine + ADP + phosphate + H2O + H(+). It functions in the pathway purine metabolism; 7-cyano-7-deazaguanine biosynthesis. Its function is as follows. Catalyzes the ATP-dependent conversion of 7-carboxy-7-deazaguanine (CDG) to 7-cyano-7-deazaguanine (preQ(0)). This Cellvibrio japonicus (strain Ueda107) (Pseudomonas fluorescens subsp. cellulosa) protein is 7-cyano-7-deazaguanine synthase.